Reading from the N-terminus, the 438-residue chain is Aspartate--tRNA(Asp) ligase (438 aa).

Glu-170 serves as a coordination point for L-aspartate. Positions 192–195 (QLYK) are aspartate. An L-aspartate-binding site is contributed by Arg-214. ATP is bound by residues 214 to 216 (RAE), 222 to 224 (RHL), and Glu-361. Glu-361 and Ser-364 together coordinate Mg(2+). Residues Ser-364 and Arg-368 each coordinate L-aspartate. 409–412 (GAER) serves as a coordination point for ATP.

This sequence belongs to the class-II aminoacyl-tRNA synthetase family. Type 2 subfamily. In terms of assembly, homodimer. Mg(2+) serves as cofactor.

It localises to the cytoplasm. It carries out the reaction tRNA(Asp) + L-aspartate + ATP = L-aspartyl-tRNA(Asp) + AMP + diphosphate. Functionally, catalyzes the attachment of L-aspartate to tRNA(Asp) in a two-step reaction: L-aspartate is first activated by ATP to form Asp-AMP and then transferred to the acceptor end of tRNA(Asp). The sequence is that of Aspartate--tRNA(Asp) ligase from Pyrococcus abyssi (strain GE5 / Orsay).